We begin with the raw amino-acid sequence, 60 residues long: Large ribosomal subunit protein uL30 (60 aa).

Belongs to the universal ribosomal protein uL30 family. As to quaternary structure, part of the 50S ribosomal subunit.

This Idiomarina loihiensis (strain ATCC BAA-735 / DSM 15497 / L2-TR) protein is Large ribosomal subunit protein uL30.